Here is a 133-residue protein sequence, read N- to C-terminus: Profilin-3 (133 aa).

Belongs to the profilin family. As to quaternary structure, occurs in many kinds of cells as a complex with monomeric actin in a 1:1 ratio.

It is found in the cytoplasm. The protein localises to the cytoskeleton. Binds to actin and affects the structure of the cytoskeleton. At high concentrations, profilin prevents the polymerization of actin, whereas it enhances it at low concentrations. By binding to PIP2, it inhibits the formation of IP3 and DG. This Ambrosia artemisiifolia (Common ragweed) protein is Profilin-3.